Consider the following 129-residue polypeptide: uncharacterized protein (129 aa).

The first 27 residues, 1–27, serve as a signal peptide directing secretion; sequence MLMRKKKLLSRISFGSLFLLCGTILSA. Cysteine 28 is lipidated: N-palmitoyl cysteine. A lipid anchor (S-diacylglycerol cysteine) is attached at cysteine 28.

The protein belongs to the MG439/MG440 family.

It localises to the cell membrane. This is an uncharacterized protein from Mycoplasma pneumoniae (strain ATCC 29342 / M129 / Subtype 1) (Mycoplasmoides pneumoniae).